Here is a 406-residue protein sequence, read N- to C-terminus: Cysteine desulfurase (406 aa).

N6-(pyridoxal phosphate)lysine is present on Lys226. Cys364 serves as the catalytic Cysteine persulfide intermediate.

This sequence belongs to the class-V pyridoxal-phosphate-dependent aminotransferase family. Csd subfamily. Homodimer. Interacts with SufE and the SufBCD complex composed of SufB, SufC and SufD. The interaction with SufE is required to mediate the direct transfer of the sulfur atom from the S-sulfanylcysteine. The cofactor is pyridoxal 5'-phosphate.

The protein resides in the cytoplasm. It carries out the reaction (sulfur carrier)-H + L-cysteine = (sulfur carrier)-SH + L-alanine. It catalyses the reaction L-selenocysteine + AH2 = hydrogenselenide + L-alanine + A + H(+). It participates in cofactor biosynthesis; iron-sulfur cluster biosynthesis. Its function is as follows. Cysteine desulfurases mobilize the sulfur from L-cysteine to yield L-alanine, an essential step in sulfur metabolism for biosynthesis of a variety of sulfur-containing biomolecules. Component of the suf operon, which is activated and required under specific conditions such as oxidative stress and iron limitation. Acts as a potent selenocysteine lyase in vitro, that mobilizes selenium from L-selenocysteine. Selenocysteine lyase activity is however unsure in vivo. This Yersinia pestis bv. Antiqua (strain Antiqua) protein is Cysteine desulfurase.